We begin with the raw amino-acid sequence, 129 residues long: ALK and LTK ligand 1 (129 aa).

Positions 1–27 (MRPLKPGAPLPALFLLALALSPHGAHG) are cleaved as a signal peptide. The tract at residues 24 to 63 (GAHGRPRGRRGARVTDKEPKPLLFLPAAGAGRTPSGSRSA) is disordered. The span at 25 to 35 (AHGRPRGRRGA) shows a compositional bias: basic residues. Cystine bridges form between Cys-90-Cys-126 and Cys-104-Cys-113.

This sequence belongs to the ALKAL family. As to expression, widely expressed with highest levels in thyroid and moderate levels in stomach, trachea, small intestine, prostate and brain.

It localises to the secreted. Its subcellular location is the cell membrane. Cytokine that acts as a physiological ligand for receptor tyrosine kinase LTK, leading to its activation. Monomeric ALKAL1 binds to LTK, leading to LTK homodimerization and activation. In contrast to ALKAL2, does not act as a potent physiological ligand for ALK. The sequence is that of ALK and LTK ligand 1 from Homo sapiens (Human).